The sequence spans 866 residues: Potassium voltage-gated channel subfamily KQT member 3 (866 aa).

The disordered stretch occupies residues 1–42 (MGLKARRPAGAAGGGGDGGGGGGGAANPAGGDAAAAGDEERK). The Cytoplasmic segment spans residues 1–120 (MGLKARRPAG…IYDALERPRG (120 aa)). Over residues 11 to 25 (AAGGGGDGGGGGGGA) the composition is skewed to gly residues. The span at 26-36 (ANPAGGDAAAA) shows a compositional bias: low complexity. Threonine 81 carries the phosphothreonine modification. The chain crosses the membrane as a helical span at residues 121-143 (WALLYHALVFLIVLGCLILAVLT). Residues 144–153 (TFREYETVSG) lie on the Extracellular side of the membrane. Residues 154–175 (DWLLLLETFAIFIFGAEFALRI) traverse the membrane as a helical segment. Topologically, residues 176–193 (WAAGCCCRYKGWRGRLKF) are cytoplasmic. Residues 194–213 (ARKPLCMLDIFVLIASVPVV) form a helical membrane-spanning segment. Topologically, residues 214-225 (AVGNQGNVLATS) are extracellular. A helical; Voltage-sensor membrane pass occupies residues 226-244 (LRSLRFLQILRMLRMDRRG). Position 243 (arginine 243) interacts with a 1,2-diacyl-sn-glycero-3-phospho-(1D-myo-inositol-4,5-bisphosphate). At 245–256 (GTWKLLGSAICA) the chain is on the cytoplasmic side. Residues 257 to 282 (HSKELITAWYIGFLTLILSSFLVYLV) form a helical membrane-spanning segment. Lysine 259 serves as a coordination point for a 1,2-diacyl-sn-glycero-3-phospho-(1D-myo-inositol-4,5-bisphosphate). Over 283–302 (EKDVPEVDAQGEEMKEEFET) the chain is Extracellular. The pore-forming intramembrane region spans 303–315 (YADALWWGLITLA). The Selectivity filter signature appears at 316–321 (TIGYGD). The Extracellular segment spans residues 316-326 (TIGYGDKTPKT). A helical transmembrane segment spans residues 327–353 (WEGRLIAATFSLIGVSFFALPAGILGS). At 354–866 (GLALKVQEQH…SIWTPSGKPT (513 aa)) the chain is on the cytoplasmic side. A mediates interaction with calmodulin region spans residues 356 to 537 (ALKVQEQHRQ…RLYKKKFKET (182 aa)). Lysine 366 is a binding site for a 1,2-diacyl-sn-glycero-3-phospho-(1D-myo-inositol-4,5-bisphosphate). Disordered stretches follow at residues 574–617 (PGPP…EDQS), 656–676 (GFSP…EDRR), and 757–866 (QVEL…GKPT). Polar residues predominate over residues 837–866 (EPFTPSGSLPLSSTGDGISDSIWTPSGKPT).

Belongs to the potassium channel family. KQT (TC 1.A.1.15) subfamily. Kv7.3/KCNQ3 sub-subfamily. In terms of assembly, heterotetramer with KCNQ2; forms heterotetrameric native M-channel responsible for the M-current. Interacts with calmodulin; the interaction is calcium-independent, constitutive and participates in the proper assembly of a functional M-channel. Heteromultimer with KCNQ5. May associate with KCNE2. Interacts with IQCJ-SCHIP1. Interacts (via the pore module) with SLC5A3/SMIT1; forms a coregulatory complex that alters ion selectivity, voltage dependence and gating kinetics of the channel. In terms of processing, KCNQ2/KCNQ3 are ubiquitinated by NEDD4L. Ubiquitination leads to protein degradation. Degradation induced by NEDD4L is inhibited by USP36.

The protein resides in the cell membrane. The enzyme catalyses K(+)(in) = K(+)(out). It catalyses the reaction Rb(+)(in) = Rb(+)(out). It carries out the reaction Cs(+)(in) = Cs(+)(out). The catalysed reaction is Na(+)(in) = Na(+)(out). With respect to regulation, phosphatidylinositol-4,5-bisphosphate (PIP2) potentiates the activation of KCNQ channels by enhancing the electro-mechanical coupling of the voltage-sensing domain (VSD) and the pore-forming domain (PD). In the closed state of the channel, PIP2 is anchored at the S2-S3 loop; upon channel activation, PIP2 interacts with the S4-S5 linker and is involved in channel gating. Calcium suppresses KCNQ2-KCNQ3 channel currents, with calcium-bound calmodulin inducing a change in channel configuration which leads to the reduction of channel affinity for PIP2 and subsequent current suppression. Pore-forming subunit of the voltage-gated potassium (Kv) M-channel which is responsible for the M-current, a key controller of neuronal excitability. M-channel is composed of pore-forming subunits KCNQ2 and KCNQ3 assembled as heterotetramers. The native M-current has a slowly activating and deactivating potassium conductance which plays a critical role in determining the subthreshold electrical excitability of neurons as well as the responsiveness to synaptic inputs. M-channel is selectively permeable in vitro to other cations besides potassium, in decreasing order of affinity K(+) &gt; Rb(+) &gt; Cs(+) &gt; Na(+). M-channel association with SLC5A3/SMIT1 alters channel ion selectivity, increasing Na(+) and Cs(+) permeation relative to K(+). Suppressed by activation of M1 muscarinic acetylcholine receptors. KCNQ3 also associates with KCNQ5 to form a functional channel in vitro and may also contribute to the M-current in brain. This chain is Potassium voltage-gated channel subfamily KQT member 3, found in Bos taurus (Bovine).